Here is a 393-residue protein sequence, read N- to C-terminus: F-box/kelch-repeat protein At4g19865 (393 aa).

A disordered region spans residues 1–30; that stretch reads MNFQVEPPEKKKTKNSSPPHSPPSSSSPSL. Residues 27-73 form the F-box domain; the sequence is SPSLSLLPEEIVVHCLARISRLYYPTLSLVSKSFRSILSSTELYATR. Kelch repeat units follow at residues 148–190, 191–237, 239–272, and 273–320; these read EIYV…FHDG, KIYV…RSGV, EGKI…ALRS, and ECMI…GGSS.

The sequence is that of F-box/kelch-repeat protein At4g19865 from Arabidopsis thaliana (Mouse-ear cress).